The primary structure comprises 676 residues: MAVKVHTTKRGDPHELRNIFLQYASTEVDGEHYMTPEDFVQRYLGLYNDPNSNPKIVQLLAGVADQTKDGLISYQEFLAFESVLCAPDSMFIVAFQLFDKSGNGEVTFENVKEIFGQTIIHHHIPFNWDCEFIRLHFGHNRKKHLNYVEFTQFLQELQLEHARQAFALKDKSKSGMISGLDFSDVMVTIRSHMLTPFVEENLVSAAGGSTSHQVSFSYFNAFNSLLNNMELVRKIYSTLAGTRKDIEVTKEEFASAITYGVVTPINVGILYFINNVHISTGRLTLADIERIAPLAEGALPYNLAELQRQQSPGLGRPIWLQIAESAYRFTLGSVAGAVGATAVYPIDLVKTRMQNQRGTGSVVGELMYKNSFDCFKKVLRYEGFFGLYRGLIPQLIGVAPEKAIKLTVNDFVRDKFTRRDGSIPLPAEILAGGCAGGSQVIFTNPLEIVKIRLQVAGEITTGPRVSALNVLQDLGLFGLYKGAKACFLRDIPFSAIYFPVYAHCKLLLADENGHVGGINLLTAGAMAGVPAASLVTPADVIKTRLQVAARAGQTTYSGVIDCFRKILREEGPSAFWKGTAARVFRSSPQFGVTLVTYELLQRWFYIDFGGLKPSGSEPTPKSRIADLPPANPDHIGGYRLATATFAGIENKFGLYLPKFKSPGVAAAQPKVAAAAQ.

Residue Ala-2 is modified to N-acetylalanine. The tract at residues Ala-2–Pro-293 is regulatory N-terminal domain. Over Ala-2–Arg-328 the chain is Mitochondrial intermembrane. Positions 65, 67, 69, 71, and 76 each coordinate Ca(2+). 4 EF-hand domains span residues Asp-65–Glu-76, Ala-86–His-121, Pro-125–Gln-155, and Leu-157–His-192. Residues Leu-294–Gln-309 form a linker loop domain region. Residues Trp-319–Leu-611 are carrier domain. Solcar repeat units follow at residues Ala-323–Lys-415, Ile-423–Leu-507, and Val-515–Trp-603. Residues Phe-329–Ile-346 traverse the membrane as a helical segment. Over Asp-347–Arg-389 the chain is Mitochondrial matrix. A helical membrane pass occupies residues Gly-390–Asn-409. At Asp-410–Gly-432 the chain is on the mitochondrial intermembrane side. Residues Gly-433–Leu-446 form a helical membrane-spanning segment. At Glu-447–Lys-481 the chain is on the mitochondrial matrix side. The chain crosses the membrane as a helical span at residues Gly-482–Tyr-501. At Ala-502–Leu-520 the chain is on the mitochondrial intermembrane side. Residues Leu-521 to Ala-538 traverse the membrane as a helical segment. At Asp-539–Lys-577 the chain is on the mitochondrial matrix side. A helical membrane pass occupies residues Gly-578–Tyr-597. The Mitochondrial intermembrane portion of the chain corresponds to Glu-598–Gln-676. Positions Lys-612–Ala-674 are C-terminal domain.

This sequence belongs to the mitochondrial carrier (TC 2.A.29) family. Homodimer (via N-terminus).

Its subcellular location is the mitochondrion inner membrane. The enzyme catalyses L-aspartate(in) + L-glutamate(out) + H(+)(out) = L-aspartate(out) + L-glutamate(in) + H(+)(in). It catalyses the reaction 3-sulfino-L-alanine(out) + L-glutamate(in) + H(+)(in) = 3-sulfino-L-alanine(in) + L-glutamate(out) + H(+)(out). The catalysed reaction is 3-sulfino-L-alanine(out) + L-aspartate(in) = 3-sulfino-L-alanine(in) + L-aspartate(out). With respect to regulation, L-aspartate and 3-sulfino-L-alanine uptake are both inhibited by glisoxepide. Functionally, mitochondrial electrogenic aspartate/glutamate antiporter that favors efflux of aspartate and entry of glutamate and proton within the mitochondria as part of the malate-aspartate shuttle. Also mediates the uptake of L-cysteinesulfinate (3-sulfino-L-alanine) by mitochondria in exchange of L-glutamate and proton. Can also exchange L-cysteinesulfinate with aspartate in their anionic form without any proton translocation. Lacks transport activity towards L-glutamine or gamma-aminobutyric acid (GABA). This is Electrogenic aspartate/glutamate antiporter SLC25A12, mitochondrial from Rattus norvegicus (Rat).